Here is a 292-residue protein sequence, read N- to C-terminus: NAD kinase (292 aa).

Asp-73 (proton acceptor) is an active-site residue. Residues 73 to 74 (DG), 147 to 148 (NE), His-158, Arg-175, Asp-177, 188 to 193 (TAYSLS), and Gln-247 contribute to the NAD(+) site.

This sequence belongs to the NAD kinase family. A divalent metal cation is required as a cofactor.

The protein resides in the cytoplasm. The catalysed reaction is NAD(+) + ATP = ADP + NADP(+) + H(+). Its function is as follows. Involved in the regulation of the intracellular balance of NAD and NADP, and is a key enzyme in the biosynthesis of NADP. Catalyzes specifically the phosphorylation on 2'-hydroxyl of the adenosine moiety of NAD to yield NADP. The sequence is that of NAD kinase from Edwardsiella ictaluri (strain 93-146).